A 402-amino-acid chain; its full sequence is Putative PDZ domain-containing protein PDZK1P1 (402 aa).

PDZ domains follow at residues 12–93 (RLCY…VDKE) and 121–206 (IVEM…VDKE). Positions 230–258 (GSVKEAPAPTPTSLEVSSPPDTTEEEDHK) are disordered. Residues 240–250 (PTSLEVSSPPD) are compositionally biased toward polar residues. The PDZ 3 domain maps to 261 to 341 (LCRLAKGENG…NVTLLVCGKK (81 aa)). Positions 362–402 (DTPPDSKEGIVVESKHDSHMAKERAHSTASHSSSNSEDTEM) are disordered. Basic and acidic residues predominate over residues 365–387 (PDSKEGIVVESKHDSHMAKERAH). Residues 388–402 (STASHSSSNSEDTEM) show a composition bias toward low complexity.

It belongs to the NHER family.

This chain is Putative PDZ domain-containing protein PDZK1P1, found in Homo sapiens (Human).